Consider the following 428-residue polypeptide: C4-dicarboxylate transport protein (428 aa).

Helical transmembrane passes span 7–27 (SLYF…IVAP), 40–60 (FIKL…VLGI), 75–95 (LALL…LLIV), 143–163 (AFAR…GIAL), 196–216 (PIGA…GSLF), 221–241 (LMAT…GAIA), 306–326 (IYLT…MTLG), 329–349 (FTLL…TGSG), and 351–371 (IVLA…LALI).

Belongs to the dicarboxylate/amino acid:cation symporter (DAACS) (TC 2.A.23) family.

The protein localises to the cell inner membrane. In terms of biological role, responsible for the transport of dicarboxylates such as succinate, fumarate, and malate from the periplasm across the membrane. This is C4-dicarboxylate transport protein from Solibacter usitatus (strain Ellin6076).